Here is a 248-residue protein sequence, read N- to C-terminus: Type III pantothenate kinase (248 aa).

6–13 (DIGNTETK) contributes to the ATP binding site. Position 103–106 (103–106 (GSDR)) interacts with substrate. The Proton acceptor role is filled by aspartate 105. Aspartate 124 lines the K(+) pocket. Threonine 127 lines the ATP pocket. Residue threonine 178 coordinates substrate.

The protein belongs to the type III pantothenate kinase family. As to quaternary structure, homodimer. NH4(+) serves as cofactor. Requires K(+) as cofactor.

It is found in the cytoplasm. It catalyses the reaction (R)-pantothenate + ATP = (R)-4'-phosphopantothenate + ADP + H(+). It functions in the pathway cofactor biosynthesis; coenzyme A biosynthesis; CoA from (R)-pantothenate: step 1/5. Its function is as follows. Catalyzes the phosphorylation of pantothenate (Pan), the first step in CoA biosynthesis. In Pelagibacter ubique (strain HTCC1062), this protein is Type III pantothenate kinase.